A 180-amino-acid chain; its full sequence is MSDSTTIARPYAKAIFEHALAEKKLSEWSEYLTLLAQVVLTPQATQFIANPASTDEQQIELLIEVCGSKFKKNDALNNLIKLLTTNKRLMLLPEIEALYEVYRAEQEKILEVDVVSYSELTPAQQQRLSESLSQRLSRKVSLKISIDPSLLGGALIRAGDLVIDGSVRGKLNMLGTSLAA.

This sequence belongs to the ATPase delta chain family. F-type ATPases have 2 components, F(1) - the catalytic core - and F(0) - the membrane proton channel. F(1) has five subunits: alpha(3), beta(3), gamma(1), delta(1), epsilon(1). F(0) has three main subunits: a(1), b(2) and c(10-14). The alpha and beta chains form an alternating ring which encloses part of the gamma chain. F(1) is attached to F(0) by a central stalk formed by the gamma and epsilon chains, while a peripheral stalk is formed by the delta and b chains.

The protein resides in the cell inner membrane. In terms of biological role, f(1)F(0) ATP synthase produces ATP from ADP in the presence of a proton or sodium gradient. F-type ATPases consist of two structural domains, F(1) containing the extramembraneous catalytic core and F(0) containing the membrane proton channel, linked together by a central stalk and a peripheral stalk. During catalysis, ATP synthesis in the catalytic domain of F(1) is coupled via a rotary mechanism of the central stalk subunits to proton translocation. Functionally, this protein is part of the stalk that links CF(0) to CF(1). It either transmits conformational changes from CF(0) to CF(1) or is implicated in proton conduction. The polypeptide is ATP synthase subunit delta (Legionella pneumophila subsp. pneumophila (strain Philadelphia 1 / ATCC 33152 / DSM 7513)).